The chain runs to 1028 residues: Carbamoyl phosphate synthase large chain (1028 aa).

Residues 1 to 409 form a carboxyphosphate synthetic domain region; it reads MPPRRDLKKI…ALMKALRGLE (409 aa). Residues arginine 129, arginine 169, glycine 175, glycine 176, glutamate 208, valine 210, glutamate 215, glycine 241, valine 242, histidine 243, glutamine 285, and glutamate 299 each coordinate ATP. An ATP-grasp 1 domain is found at 133–328; the sequence is QEAMRRIDLE…IAKIAALLAV (196 aa). Mg(2+) contacts are provided by glutamine 285, glutamate 299, and asparagine 301. Glutamine 285, glutamate 299, and asparagine 301 together coordinate Mn(2+). An oligomerization domain region spans residues 410–549; sequence RDVRALAGVR…YSTYELEDEV (140 aa). Residues 550-933 form a carbamoyl phosphate synthetic domain region; the sequence is WPSQKPKVVI…AYYKAELGAG (384 aa). In terms of domain architecture, ATP-grasp 2 spans 674 to 866; the sequence is HALCQRLGIP…LAKLAALIAV (193 aa). The ATP site is built by arginine 710, arginine 750, leucine 752, glutamate 757, glycine 782, valine 783, histidine 784, serine 785, glutamine 825, and glutamate 837. Residues glutamine 825, glutamate 837, and asparagine 839 each coordinate Mg(2+). Positions 825, 837, and 839 each coordinate Mn(2+). The region spanning 934–1028 is the MGS-like domain; that stretch reads QRLPLSGQVR…QDWHQKAPRG (95 aa). An allosteric domain region spans residues 934–1028; it reads QRLPLSGQVR…QDWHQKAPRG (95 aa).

Belongs to the CarB family. As to quaternary structure, composed of two chains; the small (or glutamine) chain promotes the hydrolysis of glutamine to ammonia, which is used by the large (or ammonia) chain to synthesize carbamoyl phosphate. Tetramer of heterodimers (alpha,beta)4. It depends on Mg(2+) as a cofactor. The cofactor is Mn(2+).

The enzyme catalyses hydrogencarbonate + L-glutamine + 2 ATP + H2O = carbamoyl phosphate + L-glutamate + 2 ADP + phosphate + 2 H(+). It catalyses the reaction hydrogencarbonate + NH4(+) + 2 ATP = carbamoyl phosphate + 2 ADP + phosphate + 2 H(+). Its pathway is amino-acid biosynthesis; L-arginine biosynthesis; carbamoyl phosphate from bicarbonate: step 1/1. It functions in the pathway pyrimidine metabolism; UMP biosynthesis via de novo pathway; (S)-dihydroorotate from bicarbonate: step 1/3. Large subunit of the glutamine-dependent carbamoyl phosphate synthetase (CPSase). CPSase catalyzes the formation of carbamoyl phosphate from the ammonia moiety of glutamine, carbonate, and phosphate donated by ATP, constituting the first step of 2 biosynthetic pathways, one leading to arginine and/or urea and the other to pyrimidine nucleotides. The large subunit (synthetase) binds the substrates ammonia (free or transferred from glutamine from the small subunit), hydrogencarbonate and ATP and carries out an ATP-coupled ligase reaction, activating hydrogencarbonate by forming carboxy phosphate which reacts with ammonia to form carbamoyl phosphate. The chain is Carbamoyl phosphate synthase large chain from Thermus thermophilus (strain ATCC BAA-163 / DSM 7039 / HB27).